Here is a 384-residue protein sequence, read N- to C-terminus: DNA dC-&gt;dU-editing enzyme APOBEC-3G (384 aa).

An essential for cytoplasmic localization region spans residues 1-60 (MKPHFRNTVERMYRDTFSYNFYNRPILSRRNTVWLCYEVKTKGPSRPPLDAKIFRGQVYS). The CMP/dCMP-type deaminase 1 domain maps to 29-138 (RRNTVWLCYE…PDYQEALRSL (110 aa)). A Phosphothreonine; by PKA modification is found at Thr32. Residues Lys42, Lys52, and Lys63 each participate in a (Microbial infection) Glycyl lysine isopeptide (Lys-Gly) (interchain with G-Cter in ubiquitin) cross-link. Zn(2+)-binding residues include His65, Cys97, and Cys100. Residues Lys150 and Lys163 each participate in a (Microbial infection) Glycyl lysine isopeptide (Lys-Gly) (interchain with G-Cter in ubiquitin) cross-link. Positions 209 to 336 (EPWVRGRHET…TLAEAGAKIS (128 aa)) are necessary for homooligomerization. An interaction with DNA region spans residues 213-215 (RGR). The region spanning 214–328 (GRHETYLCYE…GRCQEGLRTL (115 aa)) is the CMP/dCMP-type deaminase 2 domain. Thr218 is subject to Phosphothreonine; by PKA and CAMK2. Lys249 is covalently cross-linked ((Microbial infection) Glycyl lysine isopeptide (Lys-Gly) (interchain with G-Cter in ubiquitin)). Position 257 (His257) interacts with Zn(2+). The active-site Proton donor is Glu259. Lys270 participates in a covalent cross-link: (Microbial infection) Glycyl lysine isopeptide (Lys-Gly) (interchain with G-Cter in ubiquitin). 2 residues coordinate Zn(2+): Cys288 and Cys291. Residues Lys297, Lys301, and Lys303 each participate in a (Microbial infection) Glycyl lysine isopeptide (Lys-Gly) (interchain with G-Cter in ubiquitin) cross-link. Positions 313-320 (RIYDDQGR) are interaction with DNA. Lys334 is covalently cross-linked ((Microbial infection) Glycyl lysine isopeptide (Lys-Gly) (interchain with G-Cter in ubiquitin)).

It belongs to the cytidine and deoxycytidylate deaminase family. In terms of assembly, homodimer. Homooligomer. Can bind RNA to form ribonucleoprotein complexes of high-molecular-mass (HMM) or low-molecular-mass (LMM). HMM is inactive and heterogeneous in protein composition because of binding nonselectively to cellular RNAs, which in turn are associated with variety of cellular proteins. The LMM form which is enzymatically active has few or no RNAs associated. Its ability to form homooligomer is distinct from its ability to assemble into HMM. Interacts with APOBEC3B, APOBEC3F, MOV10, AGO2, EIF4E, EIF4ENIF1, DCP2 and DDX6 in an RNA-dependent manner. Interacts with AGO1, AGO3 and PKA/PRKACA. As to quaternary structure, (Microbial infection) Interacts with HIV-1 Vif; promoting its ubiquitination by a cullin-5-RING E3 ubiquitin-protein ligase complex (ECS complex) hijacked by the HIV-1 Vif. (Microbial infection) Interacts with HIV-1 reverse transcriptase/ribonuclease H. In terms of assembly, (Microbial infection) Interacts with hepatitis B virus capsid protein. It depends on Zn(2+) as a cofactor. In terms of processing, (Microbial infection) Following infection by HIV-1, ubiquitinated by a cullin-5-RING E3 ubiquitin-protein ligase complex (ECS complex) hijacked by the HIV-1 Vif protein, leading to its degradation. Deubiquitinated by USP49; leading to stabilization. Phosphorylation at Thr-32 reduces its binding to HIV-1 Vif and subsequent ubiquitination and degradation thus promoting its antiviral activity. In terms of tissue distribution, expressed in spleen, testes, ovary and peripheral blood leukocytes and CD4+ lymphocytes. Also expressed in non-permissive peripheral blood mononuclear cells, and several tumor cell lines; no expression detected in permissive lymphoid and non-lymphoid cell lines. Exists only in the LMM form in peripheral blood-derived resting CD4 T-cells and monocytes, both of which are refractory to HIV-1 infection. LMM is converted to a HMM complex when resting CD4 T-cells are activated or when monocytes are induced to differentiate into macrophages. This change correlates with increased susceptibility of these cells to HIV-1 infection.

It is found in the cytoplasm. The protein localises to the nucleus. It localises to the P-body. It carries out the reaction a 2'-deoxycytidine in single-stranded DNA + H2O + H(+) = a 2'-deoxyuridine in single-stranded DNA + NH4(+). Its activity is regulated as follows. (Microbial infection) Antiviral activity is neutralized by the HIV-1 virion infectivity factor (Vif), that prevents its incorporation into progeny virions by both inhibiting its translation and/or by inducing its ubiquitination and subsequent degradation by the 26S proteasome. Can also be neutralized by simian immunodeficiency virus sooty mangabey monkey virus (SIV-sm) and chimpanzee immunodeficiency virus (SIV-cpz) Vif. In terms of biological role, DNA deaminase (cytidine deaminase) which acts as an inhibitor of retrovirus replication and retrotransposon mobility via deaminase-dependent and -independent mechanisms. Exhibits potent antiviral activity against Vif-deficient HIV-1. After the penetration of retroviral nucleocapsids into target cells of infection and the initiation of reverse transcription, it can induce the conversion of cytosine to uracil in the minus-sense single-strand viral DNA, leading to G-to-A hypermutations in the subsequent plus-strand viral DNA. The resultant detrimental levels of mutations in the proviral genome, along with a deamination-independent mechanism that works prior to the proviral integration, together exert efficient antiretroviral effects in infected target cells. Selectively targets single-stranded DNA and does not deaminate double-stranded DNA or single- or double-stranded RNA. Exhibits antiviral activity also against simian immunodeficiency viruses (SIVs), hepatitis B virus (HBV), equine infectious anemia virus (EIAV), xenotropic MuLV-related virus (XMRV) and simian foamy virus (SFV). May inhibit the mobility of LTR and non-LTR retrotransposons. This chain is DNA dC-&gt;dU-editing enzyme APOBEC-3G, found in Homo sapiens (Human).